We begin with the raw amino-acid sequence, 449 residues long: MDIEDVIAEVLQRIVPTKEEENFVSTLMEEIKEKTEETIEELNLDAKPYFVGSLAKDTYLAGDHDVDLFIAFPLDTSLEELREKGLELGKVLGERLGKYEIAYAEHPYVRAEYKGIRVDIVPCYNVKNWKDVRTAVDRSILHTHWVLENIKGKNNEVRLLKRFLKGINAYGSEIYIRGFSGYLAEILIIEFGSFLNVLEKSDFMLRKKIIDPEDWMKRESEITMKTIKREVGEDKPLIVIDPVDPRRNVAANLSWERYGLFYFKSQEFLKEPSTEFFFPRKKIGNYLSALRSRKTHLITLTFNPPKLVDDILLPQVERTAKGIKRQLELEGFKVLGYDYGREFIFLEVDRLEREGIKVKRGPLYFTQHGKRFYEKNDIVWIEGKELASEKPISTFIVDVLEEILRKGQFSAGKNIKDAIVKGDILVDFVPKELSKDAYLFLSREKFRVK.

Ser53 and Lys56 together coordinate ATP. Residues Ser53 and Lys56 each contribute to the CTP site. The Mg(2+) site is built by Asp65, Asp67, and Asp119. ATP contacts are provided by His142, Lys161, and Tyr170. Residues His142, Lys161, and Tyr170 each contribute to the CTP site.

It belongs to the tRNA nucleotidyltransferase/poly(A) polymerase family. Archaeal CCA-adding enzyme subfamily. In terms of assembly, homodimer. The cofactor is Mg(2+).

It carries out the reaction a tRNA precursor + 2 CTP + ATP = a tRNA with a 3' CCA end + 3 diphosphate. The enzyme catalyses a tRNA with a 3' CCA end + 2 CTP + ATP = a tRNA with a 3' CCACCA end + 3 diphosphate. Its function is as follows. Catalyzes the addition and repair of the essential 3'-terminal CCA sequence in tRNAs without using a nucleic acid template. Adds these three nucleotides in the order of C, C, and A to the tRNA nucleotide-73, using CTP and ATP as substrates and producing inorganic pyrophosphate. tRNA 3'-terminal CCA addition is required both for tRNA processing and repair. Also involved in tRNA surveillance by mediating tandem CCA addition to generate a CCACCA at the 3' terminus of unstable tRNAs. While stable tRNAs receive only 3'-terminal CCA, unstable tRNAs are marked with CCACCA and rapidly degraded. This is CCA-adding enzyme from Pyrococcus horikoshii (strain ATCC 700860 / DSM 12428 / JCM 9974 / NBRC 100139 / OT-3).